The following is a 439-amino-acid chain: Secreted aspartic protease FUS4 (439 aa).

A signal peptide spans 1–22 (MLTIATLHVALQVFGAFSPSHA). The region spanning 49–434 (YLFNVTVGSP…NFEDRSFGLA (386 aa)) is the Peptidase A1 domain. N-linked (GlcNAc...) asparagine glycans are attached at residues Asn-52 and Asn-61. Residue Asp-67 is part of the active site. N-linked (GlcNAc...) asparagine glycosylation is found at Asn-101, Asn-107, and Asn-123. Asp-296 is a catalytic residue. A disulfide bridge links Cys-352 with Cys-390.

It belongs to the peptidase A1 family.

The protein resides in the secreted. In terms of biological role, secreted aspartic protease; part of the gene cluster that mediates the biosynthesis of the mycotoxin fusarin C. Within the cluster, FUS1, FUS2, FUS8 and FUS9 are sufficient for fusarin production. The other FUS cluster members are not essential for fusarin C biosynthesis. The sequence is that of Secreted aspartic protease FUS4 from Gibberella moniliformis (strain M3125 / FGSC 7600) (Maize ear and stalk rot fungus).